Consider the following 112-residue polypeptide: Probable head completion protein 2 (112 aa).

Belongs to the skunalikevirus head completion protein 2 family.

The protein localises to the virion. Functionally, probably functions as a stopper that is part of the head-tail connector and that locks the viral DNA in the capsid. During assembly, functions as a docking platform which the preassembled tail can bind to. Plays a role in morphogenesis of the virion capsid after genome packaging. This is Probable head completion protein 2 from Lactococcus phage p2 (Lactococcus lactis bacteriophage p2).